The following is an 874-amino-acid chain: Alanine--tRNA ligase (874 aa).

Residues H564, H568, C665, and H669 each contribute to the Zn(2+) site.

Belongs to the class-II aminoacyl-tRNA synthetase family. It depends on Zn(2+) as a cofactor.

It localises to the cytoplasm. The catalysed reaction is tRNA(Ala) + L-alanine + ATP = L-alanyl-tRNA(Ala) + AMP + diphosphate. Its function is as follows. Catalyzes the attachment of alanine to tRNA(Ala) in a two-step reaction: alanine is first activated by ATP to form Ala-AMP and then transferred to the acceptor end of tRNA(Ala). Also edits incorrectly charged Ser-tRNA(Ala) and Gly-tRNA(Ala) via its editing domain. This is Alanine--tRNA ligase from Paraburkholderia phytofirmans (strain DSM 17436 / LMG 22146 / PsJN) (Burkholderia phytofirmans).